The following is a 354-amino-acid chain: NADH-quinone oxidoreductase subunit H 2 (354 aa).

8 helical membrane-spanning segments follow: residues 4–24 (IALF…VLLT), 81–101 (ILAP…VPFG), 130–150 (IGLL…ALAG), 170–190 (VSYE…SGSF), 201–221 (GGFW…FIYL), 269–289 (VACI…PGFL), 296–316 (LVPV…YIWV), and 333–353 (WKFL…FVAL).

It belongs to the complex I subunit 1 family. In terms of assembly, NDH-1 is composed of 14 different subunits. Subunits NuoA, H, J, K, L, M, N constitute the membrane sector of the complex.

It is found in the cell inner membrane. It catalyses the reaction a quinone + NADH + 5 H(+)(in) = a quinol + NAD(+) + 4 H(+)(out). NDH-1 shuttles electrons from NADH, via FMN and iron-sulfur (Fe-S) centers, to quinones in the respiratory chain. The immediate electron acceptor for the enzyme in this species is believed to be ubiquinone. Couples the redox reaction to proton translocation (for every two electrons transferred, four hydrogen ions are translocated across the cytoplasmic membrane), and thus conserves the redox energy in a proton gradient. This subunit may bind ubiquinone. This chain is NADH-quinone oxidoreductase subunit H 2, found in Koribacter versatilis (strain Ellin345).